We begin with the raw amino-acid sequence, 568 residues long: AP2-like ethylene-responsive transcription factor PLT2 (568 aa).

Residues 151–171 (ASPAETSADNSSSTTNTSGGA) show a composition bias toward low complexity. A disordered region spans residues 151-173 (ASPAETSADNSSSTTNTSGGAIV). DNA-binding regions (AP2/ERF) lie at residues 190 to 256 (IYRG…TNFP) and 292 to 350 (MYRG…TNFE). Residues 548–568 (WNSGESAQGSNPGGVFTMWNE) form a disordered region.

It belongs to the AP2/ERF transcription factor family. AP2 subfamily. In terms of processing, stabilized in root meristems by reactive oxygen species (ROS) mediated oxidative post-translational modification triggered by RGF1 hormone peptide in a RITF1-dependent manner. As to expression, expressed in roots, seedlings, flowers, and siliques. Also detected at low levels in leaves. In roots, specifically detected in the distal root meristem, including the QC. This tissue specificity is regulated by auxin gradient and depends on PIN proteins.

It localises to the nucleus. Functionally, probably acts as a transcriptional activator. Binds to the GCC-box pathogenesis-related promoter element. May be involved in the regulation of gene expression by stress factors and by components of stress signal transduction pathways. Master regulator of basal/root fate. Essential for root quiescent center (QC) and columella specification, stem cell activity, as well as for establishment of the stem cell niche during embryogenesis. Modulates the root polar auxin transport by regulating the distribution of PIN genes. Essential role in respecifying pattern and polarity in damaged roots. Direct target of the transcriptional corepressor TPL. Expression levels and patterns regulated post-transcriptionally by root meristem growth factors (RGFs). The protein is AP2-like ethylene-responsive transcription factor PLT2 of Arabidopsis thaliana (Mouse-ear cress).